Consider the following 701-residue polypeptide: Centrosomal protein of 83 kDa (701 aa).

Positions 1–14 are enriched in polar residues; it reads MVVSTFTDMDTFPN. Positions 1–23 are disordered; that stretch reads MVVSTFTDMDTFPNNFPPGGDSG. Coiled coils occupy residues 40-634 and 665-698; these read LRCE…SLIL and HMQE…ELGS. Ser-698 carries the post-translational modification Phosphoserine.

This sequence belongs to the CEP83 family. Interacts with CEP164 and IFT20.

The protein resides in the cytoplasm. Its subcellular location is the cytoskeleton. It is found in the microtubule organizing center. The protein localises to the centrosome. It localises to the centriole. Its function is as follows. Component of the distal appendage region of the centriole involved in the initiation of primary cilium assembly. May collaborate with IFT20 in the trafficking of ciliary membrane proteins from the Golgi complex to the cilium during the initiation of primary cilium assembly. The polypeptide is Centrosomal protein of 83 kDa (CEP83) (Homo sapiens (Human)).